We begin with the raw amino-acid sequence, 245 residues long: DNA terminal protein (245 aa).

The Nuclear localization signal signature appears at 4–55; the sequence is KRLKKKLETKRKKSLLVSEGYSKKETKKLKGRELETVYKKKAHNRKNRERAR. The residue at position 194 (tyrosine 194) is an O-(5'-phospho-DNA)-tyrosine.

As to quaternary structure, interacts with the DNA-binding protein P1.

Its subcellular location is the virion. In terms of biological role, acts as a primer for viral genomic replication. DNA terminal protein is covalently linked to the 5'-ends of both strands of the genome through a phosphodiester bond between the beta-hydroxyl group of a tyrosine residue and the 5'-phosphate of the terminal deoxythymidylate. This protein is essential for DNA replication and is involved in the priming of DNA elongation. The chain is DNA terminal protein from Bacillus thuringiensis (Bacillus thuringiensis bacteriophage Bam35c).